Consider the following 30-residue polypeptide: Hainantoxin F7-28.42 (30 aa).

As to expression, expressed by the venom gland.

It localises to the secreted. The protein is Hainantoxin F7-28.42 of Cyriopagopus hainanus (Chinese bird spider).